The primary structure comprises 1040 residues: uncharacterized protein (1040 aa).

The Helicase ATP-binding domain maps to 403-588 (RLEESSKKGG…YSLIKFLRIK (186 aa)). Residue 416–423 (DDMGLGKT) coordinates ATP. The segment at 746–798 (CSLCMDVVAELLIIVPCGHFLCRECLTHVITSSEDMAKQTSNENISPKCSVCE) adopts an RING-type zinc-finger fold. The region spanning 866–1032 (KIEKALNAVK…ISRLNTKELS (167 aa)) is the Helicase C-terminal domain.

This sequence belongs to the SNF2/RAD54 helicase family.

It is found in the nucleus. This is an uncharacterized protein from Schizosaccharomyces pombe (strain 972 / ATCC 24843) (Fission yeast).